The sequence spans 579 residues: Probable cytochrome c biosynthesis protein (579 aa).

This sequence belongs to the CcmF/CycK/Ccl1/NrfE/CcsA family.

It is found in the mitochondrion. Could be involved in assembly and maturation of cytochromes c. May play a role in guidance of apocytochromes and heme groups for the covalent linkage introduced by the cytochrome-c-heme lyase. This Daucus carota (Wild carrot) protein is Probable cytochrome c biosynthesis protein.